Consider the following 253-residue polypeptide: Sulfate transporter CysZ (253 aa).

Helical transmembrane passes span 31–51, 75–95, 151–171, and 222–242; these read FVIL…WWLF, LLWP…FSTI, IVLL…PVLW, and IPLL…AMWV.

Belongs to the CysZ family.

Its subcellular location is the cell inner membrane. Functionally, high affinity, high specificity proton-dependent sulfate transporter, which mediates sulfate uptake. Provides the sulfur source for the cysteine synthesis pathway. The chain is Sulfate transporter CysZ from Escherichia coli (strain 55989 / EAEC).